The sequence spans 41 residues: Large ribosomal subunit protein bL36 (41 aa).

It belongs to the bacterial ribosomal protein bL36 family.

The chain is Large ribosomal subunit protein bL36 from Erythrobacter litoralis (strain HTCC2594).